Consider the following 89-residue polypeptide: Small ribosomal subunit protein uS15 (89 aa).

This sequence belongs to the universal ribosomal protein uS15 family. Part of the 30S ribosomal subunit. Forms a bridge to the 50S subunit in the 70S ribosome, contacting the 23S rRNA.

In terms of biological role, one of the primary rRNA binding proteins, it binds directly to 16S rRNA where it helps nucleate assembly of the platform of the 30S subunit by binding and bridging several RNA helices of the 16S rRNA. Its function is as follows. Forms an intersubunit bridge (bridge B4) with the 23S rRNA of the 50S subunit in the ribosome. The sequence is that of Small ribosomal subunit protein uS15 from Bartonella henselae (strain ATCC 49882 / DSM 28221 / CCUG 30454 / Houston 1) (Rochalimaea henselae).